The chain runs to 193 residues: Oligoribonuclease (193 aa).

Residues 8-171 (LVWLDLEMTG…EDIRESVAEL (164 aa)) enclose the Exonuclease domain. Residue tyrosine 129 is part of the active site.

This sequence belongs to the oligoribonuclease family.

Its subcellular location is the cytoplasm. In terms of biological role, 3'-to-5' exoribonuclease specific for small oligoribonucleotides. The sequence is that of Oligoribonuclease from Alkalilimnicola ehrlichii (strain ATCC BAA-1101 / DSM 17681 / MLHE-1).